The sequence spans 315 residues: Acetyl-coenzyme A carboxylase carboxyl transferase subunit alpha (315 aa).

Positions 35 to 289 (KLSKKRFELM…RKAVAAELKI (255 aa)) constitute a CoA carboxyltransferase C-terminal domain.

This sequence belongs to the AccA family. As to quaternary structure, acetyl-CoA carboxylase is a heterohexamer composed of biotin carboxyl carrier protein (AccB), biotin carboxylase (AccC) and two subunits each of ACCase subunit alpha (AccA) and ACCase subunit beta (AccD).

The protein resides in the cytoplasm. It carries out the reaction N(6)-carboxybiotinyl-L-lysyl-[protein] + acetyl-CoA = N(6)-biotinyl-L-lysyl-[protein] + malonyl-CoA. The protein operates within lipid metabolism; malonyl-CoA biosynthesis; malonyl-CoA from acetyl-CoA: step 1/1. Functionally, component of the acetyl coenzyme A carboxylase (ACC) complex. First, biotin carboxylase catalyzes the carboxylation of biotin on its carrier protein (BCCP) and then the CO(2) group is transferred by the carboxyltransferase to acetyl-CoA to form malonyl-CoA. In Francisella tularensis subsp. mediasiatica (strain FSC147), this protein is Acetyl-coenzyme A carboxylase carboxyl transferase subunit alpha.